The primary structure comprises 64 residues: UPF0337 protein SH2043 (64 aa).

The segment at 1–64 (MAEDKFEQAK…DKVKGNNDNK (64 aa)) is disordered. Over residues 22-64 (DNKDLEKEGQNDKASGKAKEAVENVKNKANDLIDKVKGNNDNK) the composition is skewed to basic and acidic residues.

The protein belongs to the UPF0337 (CsbD) family.

The protein is UPF0337 protein SH2043 of Staphylococcus haemolyticus (strain JCSC1435).